We begin with the raw amino-acid sequence, 317 residues long: Metaxin-1 (317 aa).

Residues Lys38, Lys41, and Lys78 each participate in a glycyl lysine isopeptide (Lys-Gly) (interchain with G-Cter in ubiquitin) cross-link. Residues Glu164–Arg184 form a helical membrane-spanning segment.

This sequence belongs to the metaxin family. Interacts with MTX2/metaxin-2. Associates with the mitochondrial contact site and cristae organizing system (MICOS) complex, composed of at least MICOS10/MIC10, CHCHD3/MIC19, CHCHD6/MIC25, APOOL/MIC27, IMMT/MIC60, APOO/MIC23/MIC26 and QIL1/MIC13. This complex was also known under the names MINOS or MitOS complex. The MICOS complex associates with mitochondrial outer membrane proteins SAMM50, MTX1 and MTX2 (together described as components of the mitochondrial outer membrane sorting assembly machinery (SAM) complex) and DNAJC11, mitochondrial inner membrane protein TMEM11 and with HSPA9. The MICOS and SAM complexes together with DNAJC11 are part of a large protein complex spanning both membranes termed the mitochondrial intermembrane space bridging (MIB) complex. Interacts with ARMC1. In terms of processing, ubiquitinated by PRKN during mitophagy, leading to its degradation and enhancement of mitophagy. Deubiquitinated by USP30.

It is found in the mitochondrion outer membrane. In terms of biological role, involved in transport of proteins into the mitochondrion. Essential for embryonic development. This chain is Metaxin-1 (MTX1), found in Sus scrofa (Pig).